Here is a 309-residue protein sequence, read N- to C-terminus: Histone-lysine N-methyltransferase SETMAR (309 aa).

One can recognise a Pre-SET domain in the interval 74–137 (PGCACIETPC…RCRNRVVQNG (64 aa)). Positions 76, 78, 83, 88, 90, 119, 123, 125, and 129 each coordinate Zn(2+). The SET domain maps to 140-264 (FLLQVFQTEK…PGEELSYDYS (125 aa)). S-adenosyl-L-methionine contacts are provided by residues 150 to 152 (KGW), Tyr-193, Arg-221, and 224 to 225 (NH). Residues Cys-227, Cys-288, Cys-290, and Cys-295 each contribute to the Zn(2+) site. The 17-residue stretch at 284 to 300 (PRKPCYCGAQSCTTFLP) folds into the Post-SET domain.

This sequence belongs to the class V-like SAM-binding methyltransferase superfamily.

The protein resides in the nucleus. The protein localises to the chromosome. It catalyses the reaction L-lysyl(36)-[histone H3] + 2 S-adenosyl-L-methionine = N(6),N(6)-dimethyl-L-lysyl(36)-[histone H3] + 2 S-adenosyl-L-homocysteine + 2 H(+). Its function is as follows. Histone methyltransferase that methylates 'Lys-4' and 'Lys-36' of histone H3, 2 specific tags for epigenetic transcriptional activation. Specifically mediates dimethylation of H3 'Lys-36'. The protein is Histone-lysine N-methyltransferase SETMAR of Mus musculus (Mouse).